The primary structure comprises 309 residues: Zinc transporter ZIP2 (309 aa).

The Extracellular segment spans residues 1–8 (MEVLLGVK). A helical transmembrane segment spans residues 9 to 29 (IGCLLALLVLTLGCGLTPIYV). Residues 30-43 (KWFQMDAATGHHHR) lie on the Cytoplasmic side of the membrane. The helical transmembrane segment at 44–64 (VLSLLGCTSAGVFLGAGLMHM) threads the bilayer. Topologically, residues 65-103 (TAEALEGIESEIQKFVEQNSTGSKGNSSRDAASSYVEYP) are extracellular. The chain crosses the membrane as a helical span at residues 104-124 (YGELVISLGFFFVFLLESLAL). Topologically, residues 125 to 164 (QCCHGAAGGSTVQEEEWGGTHAFGFHKHPAVPSPSRGPLR) are cytoplasmic. Residues 165–185 (ALVLLLSLSFHSVFEGLAVGL) traverse the membrane as a helical segment. Zn(2+)-binding residues include His175 and Glu179. Topologically, residues 186–191 (QATVAA) are extracellular. Residues 192-212 (TIQLCVAVLAHKGLVVFSVGL) form a helical membrane-spanning segment. Residue His202 coordinates Zn(2+). Residues 213–225 (RLGKIGTGPRWAT) are Cytoplasmic-facing. The chain crosses the membrane as a helical span at residues 226–246 (FCILSLALMSPVGLALGLTVA). Over 247-258 (GGASGQTQGLAQ) the chain is Extracellular. A helical membrane pass occupies residues 259–279 (AVLEGIAAGTFLYVTFLEILP). Residue Glu276 coordinates Zn(2+). The Cytoplasmic segment spans residues 280 to 288 (RELACPEAP). The helical transmembrane segment at 289–309 (LAKYSCVAAGFAFMALIALWA) threads the bilayer.

The protein belongs to the ZIP transporter (TC 2.A.5) family. High expression in the liver, skin and ovary.

The protein localises to the cell membrane. The catalysed reaction is Zn(2+)(in) = Zn(2+)(out). It catalyses the reaction Cd(2+)(in) = Cd(2+)(out). Transporter for the divalent cation Zn(2+). Mediates the influx of Zn(2+) into cells from extracellular space. The Zn(2+) uniporter activity is independent of H(+)-driving force, but is modulated by extracellular pH and membrane potential. Transports also other divalent cations Zn(2+), Cd2(+), Cu2(+), Co2(+) in the order of decreasing affinity, respectively. In the skin, aids in the differentiation of keratinocytes in the epidermis. This is Zinc transporter ZIP2 (Slc39a2) from Mus musculus (Mouse).